Here is an 827-residue protein sequence, read N- to C-terminus: Rho GTPase-activating protein 6 (827 aa).

One can recognise a PH domain in the interval 18–125 (TVYKSGPLFI…WKAALEQALA (108 aa)). The 200-residue stretch at 172–371 (LALEEIDGSP…ALLEDYGNMI (200 aa)) folds into the Rho-GAP domain. 2 disordered regions span residues 379–437 (CSTS…SDYA) and 517–561 (YTTS…SSGN). A compositionally biased stretch (basic and acidic residues) spans 401–412 (IVVKHPDLHTLD). The segment covering 413–423 (IEEGETDDDND) has biased composition (acidic residues). Positions 517 to 543 (YTTSAEKPASKTTGSSTVNSKRSSSWG) are enriched in polar residues. The stretch at 560–684 (GNDELLIQRL…HQLSQQRQHH (125 aa)) forms a coiled coil.

Functionally, acts as a GTPase activator for the Rac-type GTPase by converting it to an inactive GDP-bound state. This Arabidopsis thaliana (Mouse-ear cress) protein is Rho GTPase-activating protein 6 (ROPGAP6).